The primary structure comprises 310 residues: Serine/threonine-protein kinase pim-2 (310 aa).

The Protein kinase domain maps to 30–290 (YTMGNLLGSG…LEQILQHPWM (261 aa)). ATP is bound by residues 36–44 (LGSGGFGSV) and K59. Catalysis depends on D167, which acts as the Proton acceptor.

Belongs to the protein kinase superfamily. CAMK Ser/Thr protein kinase family. PIM subfamily. Post-translationally, autophosphorylated.

The enzyme catalyses L-seryl-[protein] + ATP = O-phospho-L-seryl-[protein] + ADP + H(+). The catalysed reaction is L-threonyl-[protein] + ATP = O-phospho-L-threonyl-[protein] + ADP + H(+). In terms of biological role, proto-oncogene with serine/threonine kinase activity involved in cell survival and cell proliferation. The sequence is that of Serine/threonine-protein kinase pim-2 (pim2) from Danio rerio (Zebrafish).